The chain runs to 116 residues: Iron-sulfur cluster insertion protein ErpA (116 aa).

Cysteine 44, cysteine 108, and cysteine 110 together coordinate iron-sulfur cluster.

The protein belongs to the HesB/IscA family. Homodimer. Requires iron-sulfur cluster as cofactor.

In terms of biological role, required for insertion of 4Fe-4S clusters for at least IspG. This Francisella tularensis subsp. mediasiatica (strain FSC147) protein is Iron-sulfur cluster insertion protein ErpA.